The following is a 324-amino-acid chain: NAC domain-containing protein 30 (324 aa).

Positions 9–158 (MPPGFRFHPT…GWVVCRAFRK (150 aa)) constitute an NAC domain. A DNA-binding region spans residues 109–164 (IGMRKTLVYYKGRAPNGRKSDWIMHEYRLQNSELAPVQEEGWVVCRAFRKPIPNQR). Residues 232–244 (LPQLDSPSLSPSL) are compositionally biased toward low complexity. The tract at residues 232–259 (LPQLDSPSLSPSLGTNKDQNESFEQEEE) is disordered.

It belongs to the plant vascular related NAC-domain protein family. Forms homodimer and heterodimers with other VND proteins (e.g. NAC037/VND1, NAC076/VND2 and NAC105/VND3) via their N-termini. Interacts with NAC083/VNI2. In terms of tissue distribution, expressed in developing protoxylems in roots and shoots. Detected in root protoxylem poles and in vessels of protoxylems, outermost metaxylems, inner metaxylems, shoots and hypocotyls. Expressed in roots, hypocotyls, cotyledons and leaves. Accumulates in the xylem but not in interfascicular fibers or pith cells in inflorescence stems. Present in developing vessels of the secondary xylem in roots undergoing secondary growth.

The protein localises to the nucleus. Transcription activator that binds to the secondary wall NAC binding element (SNBE), 5'-(T/A)NN(C/T)(T/C/G)TNNNNNNNA(A/C)GN(A/C/T)(A/T)-3', in the promoter of target genes (e.g. genes involved in secondary wall biosynthesis, cell wall modification such as xylan accumulation, and programmed cell death). Involved in xylem formation in roots and shoots, especially regulating protoxylem vessel differentiation by promoting immature xylem vessel-specific genes expression. Can activate the expression of several genes including XCP1, MYB46, NAC010/SND3, MYB103, MYB58, MYB63, MYB83, KNAT7, ASL19 and ASL20. Functionally, required for the soilborne fungal pathogen Verticillium longisporum-induced transdifferentiation of chloroplast-containing bundle sheath cells to functional xylem elements leading to stunted growth, vein clearing, and leaf chloroses, as well as xylem hyperplasia within the vasculature of leaves, hypocotyls, and roots due to reinitiation of cambial activity and transdifferentiation of xylem parenchyma cells. This developmental reprogramming also mediates an increased drought stress tolerance. This Arabidopsis thaliana (Mouse-ear cress) protein is NAC domain-containing protein 30.